The following is a 212-amino-acid chain: ATP-dependent Clp protease proteolytic subunit (212 aa).

The Nucleophile role is filled by Ser114. Residue His139 is part of the active site.

This sequence belongs to the peptidase S14 family. As to quaternary structure, fourteen ClpP subunits assemble into 2 heptameric rings which stack back to back to give a disk-like structure with a central cavity, resembling the structure of eukaryotic proteasomes.

Its subcellular location is the cytoplasm. The catalysed reaction is Hydrolysis of proteins to small peptides in the presence of ATP and magnesium. alpha-casein is the usual test substrate. In the absence of ATP, only oligopeptides shorter than five residues are hydrolyzed (such as succinyl-Leu-Tyr-|-NHMec, and Leu-Tyr-Leu-|-Tyr-Trp, in which cleavage of the -Tyr-|-Leu- and -Tyr-|-Trp bonds also occurs).. Functionally, cleaves peptides in various proteins in a process that requires ATP hydrolysis. Has a chymotrypsin-like activity. Plays a major role in the degradation of misfolded proteins. The polypeptide is ATP-dependent Clp protease proteolytic subunit (Azoarcus sp. (strain BH72)).